The chain runs to 389 residues: Chalcone synthase 9 (389 aa).

Residue cysteine 164 is part of the active site.

It belongs to the thiolase-like superfamily. Chalcone/stilbene synthases family.

It carries out the reaction (E)-4-coumaroyl-CoA + 3 malonyl-CoA + 3 H(+) = 2',4,4',6'-tetrahydroxychalcone + 3 CO2 + 4 CoA. It functions in the pathway secondary metabolite biosynthesis; flavonoid biosynthesis. Its function is as follows. The primary product of this enzyme is 4,2',4',6'-tetrahydroxychalcone (also termed naringenin-chalcone or chalcone) which can under specific conditions spontaneously isomerize into naringenin. The polypeptide is Chalcone synthase 9 (CHS9) (Daucus carota (Wild carrot)).